Here is a 111-residue protein sequence, read N- to C-terminus: Cytochrome c (111 aa).

Ala-1 carries the N-acetylalanine modification. Cys-22, Cys-25, and His-26 together coordinate heme c. An N6,N6,N6-trimethyllysine modification is found at Lys-80. Residue Met-88 participates in heme c binding. At Lys-94 the chain carries N6,N6,N6-trimethyllysine.

This sequence belongs to the cytochrome c family. Post-translationally, binds 1 heme c group covalently per subunit.

Its subcellular location is the mitochondrion intermembrane space. Functionally, electron carrier protein. The oxidized form of the cytochrome c heme group can accept an electron from the heme group of the cytochrome c1 subunit of cytochrome reductase. Cytochrome c then transfers this electron to the cytochrome oxidase complex, the final protein carrier in the mitochondrial electron-transport chain. This Gossypium barbadense (Sea Island cotton) protein is Cytochrome c.